A 677-amino-acid chain; its full sequence is Methionine--tRNA ligase (677 aa).

The short motif at 15–25 (PYANGSIHLGH) is the 'HIGH' region element. 4 residues coordinate Zn(2+): cysteine 146, cysteine 149, cysteine 159, and cysteine 162. The short motif at 333 to 337 (KMSKS) is the 'KMSKS' region element. Residue lysine 336 participates in ATP binding. Residues 575 to 677 (DFAKVDLRVA…AGAKPGHQVK (103 aa)) enclose the tRNA-binding domain.

It belongs to the class-I aminoacyl-tRNA synthetase family. MetG type 1 subfamily. In terms of assembly, homodimer. It depends on Zn(2+) as a cofactor.

Its subcellular location is the cytoplasm. It catalyses the reaction tRNA(Met) + L-methionine + ATP = L-methionyl-tRNA(Met) + AMP + diphosphate. In terms of biological role, is required not only for elongation of protein synthesis but also for the initiation of all mRNA translation through initiator tRNA(fMet) aminoacylation. The protein is Methionine--tRNA ligase of Escherichia coli O127:H6 (strain E2348/69 / EPEC).